The chain runs to 257 residues: Ribosomal large subunit pseudouridine synthase B (257 aa).

In terms of domain architecture, S4 RNA-binding spans alanine 3–lysine 63. The Nucleophile role is filled by aspartate 109.

It belongs to the pseudouridine synthase RsuA family.

It carries out the reaction uridine(2605) in 23S rRNA = pseudouridine(2605) in 23S rRNA. Responsible for synthesis of pseudouridine from uracil-2605 in 23S ribosomal RNA. This Buchnera aphidicola subsp. Schizaphis graminum (strain Sg) protein is Ribosomal large subunit pseudouridine synthase B (rluB).